Reading from the N-terminus, the 158-residue chain is Peptide methionine sulfoxide reductase MsrA (158 aa).

The active site involves Cys10.

It belongs to the MsrA Met sulfoxide reductase family.

It catalyses the reaction L-methionyl-[protein] + [thioredoxin]-disulfide + H2O = L-methionyl-(S)-S-oxide-[protein] + [thioredoxin]-dithiol. It carries out the reaction [thioredoxin]-disulfide + L-methionine + H2O = L-methionine (S)-S-oxide + [thioredoxin]-dithiol. Has an important function as a repair enzyme for proteins that have been inactivated by oxidation. Catalyzes the reversible oxidation-reduction of methionine sulfoxide in proteins to methionine. The protein is Peptide methionine sulfoxide reductase MsrA of Alkaliphilus metalliredigens (strain QYMF).